A 529-amino-acid polypeptide reads, in one-letter code: MQQRRPVRRALLSVSDKAGIVEFAQALSARGVELLSTGGTARLLAEKGLPVTEVSDYTGFPEMMDGRVKTLHPKVHGGILGRRGQDDAIMEEHQIQPIDMVVVNLYPFAQTVAREGCSLEDAVENIDIGGPTMVRSAAKNHKDVAIVVKSSDYDAIIKEMDANEGSLTLATRFDLAIKAFEHTAAYDSMIANYFGSMVPAYHGESKEAAGRFPRTLNLNFIKKQDMRYGENSHQQAAFYIEENVKEASVATATQVQGKALSYNNIADTDAALECVKEFAEPACVIVKHANPCGVAIGNSILDAYDRAYKTDPTSAFGGIIAFNRELDAETAQAIISRQFVEVIIAPSASEEALQITAAKQNVRVLTCGQWAERVPGLDFKRVNGGLLVQDRDLGMVGAEELRVVTKRQPTEQELRDALFCWKVAKFVKSNAIVYAKNNMTIGIGAGQMSRVYSAKIAGIKAADEGLEVKGSSMASDAFFPFRDGIDAAAAAGVTCVIQPGGSIRDDEVIAAADEHGIAMLFTDMRHFRH.

Positions 1 to 148 constitute an MGS-like domain; the sequence is MQQRRPVRRA…KNHKDVAIVV (148 aa). Lysine 287 carries the post-translational modification N6-acetyllysine.

The protein belongs to the PurH family.

The enzyme catalyses (6R)-10-formyltetrahydrofolate + 5-amino-1-(5-phospho-beta-D-ribosyl)imidazole-4-carboxamide = 5-formamido-1-(5-phospho-D-ribosyl)imidazole-4-carboxamide + (6S)-5,6,7,8-tetrahydrofolate. It carries out the reaction IMP + H2O = 5-formamido-1-(5-phospho-D-ribosyl)imidazole-4-carboxamide. Its pathway is purine metabolism; IMP biosynthesis via de novo pathway; 5-formamido-1-(5-phospho-D-ribosyl)imidazole-4-carboxamide from 5-amino-1-(5-phospho-D-ribosyl)imidazole-4-carboxamide (10-formyl THF route): step 1/1. It functions in the pathway purine metabolism; IMP biosynthesis via de novo pathway; IMP from 5-formamido-1-(5-phospho-D-ribosyl)imidazole-4-carboxamide: step 1/1. The chain is Bifunctional purine biosynthesis protein PurH from Escherichia fergusonii (strain ATCC 35469 / DSM 13698 / CCUG 18766 / IAM 14443 / JCM 21226 / LMG 7866 / NBRC 102419 / NCTC 12128 / CDC 0568-73).